The sequence spans 442 residues: Protein phosphatase 2C 3 (442 aa).

The disordered stretch occupies residues 30 to 100 (RFRMSPSEMN…VSISDGNSSV (71 aa)). Residues 79–90 (PEEESVSLEDSD) are compositionally biased toward acidic residues. In terms of domain architecture, PPM-type phosphatase spans 120–433 (RYGVASVCGR…DNVSVVVIDL (314 aa)). The Mn(2+) site is built by Asp-162, Gly-163, and Asp-339. The disordered stretch occupies residues 363–401 (GRGRRRGETQTPGRRSEEEGKEEEEKVVGSRKNGKRGEI). The span at 376–390 (RRSEEEGKEEEEKVV) shows a compositional bias: basic and acidic residues. Asp-424 lines the Mn(2+) pocket.

The protein belongs to the PP2C family. As to quaternary structure, part of a K(+)-channel calcium-sensing kinase/phosphatase complex composed by a calcium sensor CBL (CBL1, CBL2, CBL3 or CBL9), a kinase CIPK (CIPK6, CIPK16 or CIPK23), a phosphatase PP2C (AIP1) and a K(+)-channel (AKT1). Interacts with AKT1 and CIPK23. Interacts with PYL8/RCAR3 in an abscisic acid-independent. Interacts with PYR1/RCAR11 in an abscisic acid-dependent manner. Mg(2+) is required as a cofactor. Requires Mn(2+) as cofactor. As to expression, expressed in shoot meristem, vascular tissues of cotyledons, and in primary roots surrounding the root meristem. Highly expressed in seeds.

The protein localises to the cell membrane. Its subcellular location is the cytoplasm. The protein resides in the nucleus. The enzyme catalyses O-phospho-L-seryl-[protein] + H2O = L-seryl-[protein] + phosphate. It carries out the reaction O-phospho-L-threonyl-[protein] + H2O = L-threonyl-[protein] + phosphate. Involved in the negative regulation of the K(+) potassium channel AKT1 by its dephosphorylation, antagonistically to CIPK proteins (e.g. CIPK23). Functions as a positive regulator of abscisic acid-mediated cell signaling during seedling growth. Involved in the regulation of seed dormancy. Acts as a negative regulator of seed dormancy by inhibiting abscisic signaling and subsequently activating gibberellic acid signaling. The protein is Protein phosphatase 2C 3 of Arabidopsis thaliana (Mouse-ear cress).